Reading from the N-terminus, the 487-residue chain is Solute carrier family 22 member 15-like (487 aa).

A helical membrane pass occupies residues 23–43 (FLTLLQIYVACQSMLIVLVGA). An N-linked (GlcNAc...) asparagine glycan is attached at asparagine 70. The next 11 helical transmembrane spans lie at 90 to 110 (LASS…GPLS), 117 to 137 (PVYL…ALAP), 141 to 161 (VFAV…LVSF), 178 to 198 (SLTN…GFYI), 203 to 223 (TLAF…FVLP), 286 to 306 (ILLM…TLNA), 315 to 335 (LNVA…LYFI), 345 to 365 (ATAG…FVPE), 374 to 394 (TVLA…VYIY), 408 to 428 (LGVC…IPAM), and 435 to 455 (MPFV…LLLP).

This sequence belongs to the major facilitator (TC 2.A.1) superfamily. Organic cation transporter (TC 2.A.1.19) family.

The protein localises to the membrane. Functionally, probably transports organic cations. The sequence is that of Solute carrier family 22 member 15-like (slc22a15b) from Xenopus laevis (African clawed frog).